The chain runs to 273 residues: Holocytochrome c-type synthase (273 aa).

Positions 1–18 (MGLSASSPAATAQSAAEP) are enriched in low complexity. Residues 1 to 39 (MGLSASSPAATAQSAAEPSKQHQVASPPSECPMHQEKMR) form a disordered region. 2 HRM repeats span residues 30 to 35 (ECPMHQ) and 40 to 45 (GCPMHM).

Belongs to the cytochrome c-type heme lyase family.

The protein localises to the mitochondrion inner membrane. The enzyme catalyses holo-[cytochrome c] = apo-[cytochrome c] + heme b. Functionally, lyase that catalyzes the covalent linking of the heme group to the cytochrome C apoprotein to produce the mature functional cytochrome. This is Holocytochrome c-type synthase (HCCS) from Gallus gallus (Chicken).